A 277-amino-acid chain; its full sequence is uncharacterized protein (277 aa).

The tract at residues 1–20 is disordered; it reads MVTTSPPPTLTNSVQPHPTT.

This is an uncharacterized protein from Acidianus convivator (ATV).